The following is a 271-amino-acid chain: 3-methyl-2-oxobutanoate hydroxymethyltransferase (271 aa).

2 residues coordinate Mg(2+): Asp49 and Asp88. 3-methyl-2-oxobutanoate is bound by residues 49-50, Asp88, and Lys118; that span reads DS. Glu120 is a binding site for Mg(2+). The active-site Proton acceptor is the Glu187.

It belongs to the PanB family. Homodecamer; pentamer of dimers. It depends on Mg(2+) as a cofactor.

Its subcellular location is the cytoplasm. The catalysed reaction is 3-methyl-2-oxobutanoate + (6R)-5,10-methylene-5,6,7,8-tetrahydrofolate + H2O = 2-dehydropantoate + (6S)-5,6,7,8-tetrahydrofolate. Its pathway is cofactor biosynthesis; (R)-pantothenate biosynthesis; (R)-pantoate from 3-methyl-2-oxobutanoate: step 1/2. Functionally, catalyzes the reversible reaction in which hydroxymethyl group from 5,10-methylenetetrahydrofolate is transferred onto alpha-ketoisovalerate to form ketopantoate. The protein is 3-methyl-2-oxobutanoate hydroxymethyltransferase of Bartonella bacilliformis (strain ATCC 35685 / KC583 / Herrer 020/F12,63).